A 185-amino-acid chain; its full sequence is MSPRAVLVGLPGSGKTTIGKRLANALNLQLVDTDHMLEKKLGKTCNQIMGELGEPAFREQEAIVVAEALQTDGIVSLGGGAVVTESTRELLADHTVVYLNVSIDEGVRRTSGSNTRPLLNVADPRGKYAQLFAQRSAFYEEVSNFMVRCDGKEPRRVVTDILSFIEEVRLERLTERDASHQIRPQ.

Residue 12 to 17 (GSGKTT) participates in ATP binding. Mg(2+) is bound at residue T16. D34, R58, and G79 together coordinate substrate. R116 lines the ATP pocket. Substrate is bound at residue R135.

The protein belongs to the shikimate kinase family. In terms of assembly, monomer. It depends on Mg(2+) as a cofactor.

It localises to the cytoplasm. The catalysed reaction is shikimate + ATP = 3-phosphoshikimate + ADP + H(+). Its pathway is metabolic intermediate biosynthesis; chorismate biosynthesis; chorismate from D-erythrose 4-phosphate and phosphoenolpyruvate: step 5/7. Catalyzes the specific phosphorylation of the 3-hydroxyl group of shikimic acid using ATP as a cosubstrate. The protein is Shikimate kinase of Corynebacterium jeikeium (strain K411).